The chain runs to 360 residues: Codeine O-demethylase (360 aa).

A Fe2OG dioxygenase domain is found at 211-311; it reads GLQTMRMNYY…RLSIATFHDS (101 aa). 2-oxoglutarate is bound at residue Y220. Fe cation contacts are provided by H235, D237, and H292. 2-oxoglutarate-binding residues include R302 and S304.

The protein belongs to the iron/ascorbate-dependent oxidoreductase family. L-ascorbate serves as cofactor. The cofactor is Fe cation. In terms of tissue distribution, mainly expressed in stems, capsules and leaves and, to a lower extent, in roots.

The catalysed reaction is codeine + 2-oxoglutarate + O2 = morphine + formaldehyde + succinate + CO2. It carries out the reaction thebaine + 2-oxoglutarate + O2 = oripavine + formaldehyde + succinate + CO2. It catalyses the reaction (S)-scoulerine + 2-oxoglutarate + O2 = (S)-3-O-demethylscoulerine + formaldehyde + succinate + CO2. The enzyme catalyses thebaine + 2-oxoglutarate + O2 = neopinone + formaldehyde + succinate + CO2. The catalysed reaction is (S)-reticuline + 2-oxoglutarate + O2 = (S)-6-O-demethylreticuline + formaldehyde + succinate + CO2. It carries out the reaction (S)-tetrahydropalmatine + S-adenosyl-L-methionine = (S)-cis-N-methyltetrahydropalmatine + S-adenosyl-L-homocysteine. The protein operates within alkaloid biosynthesis; morphine biosynthesis. With respect to regulation, moderate substrate inhibition. Not inhibited in vitro by acylcyclohexanediones. Non-heme dioxygenase involved in biosynthesis of morphinan-type benzylisoquinoline and opiate alkaloids natural products. Mediates the conversion of codeine to morphine. Also catalyzes, with lower efficiency, the 3-O-demethylation of thebaine to oripavine and of (S)-scoulerine to 3-O-demethylscoulerine. Supports, with a lower turnover, the conversion of codeinone to morphinone, of thebaine to neopinone, and of neopine to neomorphine. Supports dealkylation reactions such as O,O-demethylenation in the metabolism of protopine, benzo[c]phenanthridine, and rhoeadine alkaloids; cleaves a methylenedioxy bridge leaving two hydroxyl groups. Catalyzes the O,O-demethylenation of methylenedioxy bridges on protopine alkaloids such as allocryptopine, cryptopine and protopine. No activity with (S)-reticuline, salutaridine, papaverine, (S)-corytuberine, oripavine, pavine or noscapine. This is Codeine O-demethylase from Papaver somniferum (Opium poppy).